The primary structure comprises 387 residues: Lipid-A-disaccharide synthase (387 aa).

It belongs to the LpxB family.

The catalysed reaction is a lipid X + a UDP-2-N,3-O-bis[(3R)-3-hydroxyacyl]-alpha-D-glucosamine = a lipid A disaccharide + UDP + H(+). It participates in bacterial outer membrane biogenesis; LPS lipid A biosynthesis. Functionally, condensation of UDP-2,3-diacylglucosamine and 2,3-diacylglucosamine-1-phosphate to form lipid A disaccharide, a precursor of lipid A, a phosphorylated glycolipid that anchors the lipopolysaccharide to the outer membrane of the cell. The polypeptide is Lipid-A-disaccharide synthase (Glaesserella parasuis serovar 5 (strain SH0165) (Haemophilus parasuis)).